Reading from the N-terminus, the 226-residue chain is Orotidine 5'-phosphate decarboxylase (226 aa).

Residues D8, K30, 58–67, T117, R177, Q186, G206, and R207 each bind substrate; that span reads DLKIHDIPNT. Catalysis depends on K60, which acts as the Proton donor.

The protein belongs to the OMP decarboxylase family. Type 1 subfamily. Homodimer.

It carries out the reaction orotidine 5'-phosphate + H(+) = UMP + CO2. It functions in the pathway pyrimidine metabolism; UMP biosynthesis via de novo pathway; UMP from orotate: step 2/2. Functionally, catalyzes the decarboxylation of orotidine 5'-monophosphate (OMP) to uridine 5'-monophosphate (UMP). The sequence is that of Orotidine 5'-phosphate decarboxylase from Campylobacter jejuni subsp. jejuni serotype O:6 (strain 81116 / NCTC 11828).